The sequence spans 383 residues: Trichodiene synthase (383 aa).

This sequence belongs to the trichodiene synthase family.

It carries out the reaction (2E,6E)-farnesyl diphosphate = trichodiene + diphosphate. It functions in the pathway sesquiterpene biosynthesis; trichothecene biosynthesis. In terms of biological role, TS is a member of the terpene cyclase group of enzymes. It catalyzes the isomerization and cyclization of farnesyl pyro-phosphate to form trichodiene, the first cyclic intermediate in the biosynthetic pathway for trichothecenes. It serves to branch trichothecene biosynthesis from the isoprenoid pathway. The chain is Trichodiene synthase (TRI5) from Stachybotrys chartarum (Toxic black mold).